Here is a 371-residue protein sequence, read N- to C-terminus: MLNEFIAIRRDLHQIPETGYKELKTQAYLLAYISKLPNKHLEVKKWRTGILVLVKGTKPEKTIGYRTDIDALPITEETGLPFESNHVGNMHACGHDLHMSIALGVLTHFASKPAKDNLLFVFQPAEEGPGGAKPIMESEEFAAWRPDTIYGLHIAPEYKVGEIAIKPGLLFANTSELFISFKGKGGHAAYPHLANDMVVAASAFVGQMQTIISRNIDPMDSAVITIGRIHGGEIQNVIAETAFLDGTIRTLSPETMEIVWTRLKQLAKGWEEAYQCEVEFHPGSDYYQVDNEPLETEEFIRFLKEHYPESYVPARSAMTGEDFGYFLSEIKGFMFWLGVDSEYSLHHAKLNPKEEAIPFAIDVLINFLESK.

Aspartate 68 is a catalytic residue. Glutamate 127 functions as the Proton acceptor in the catalytic mechanism.

It belongs to the peptidase M20A family. N-acetyldiaminopimelate deacetylase subfamily.

It carries out the reaction N-acetyl-(2S,6S)-2,6-diaminopimelate + H2O = (2S,6S)-2,6-diaminopimelate + acetate. Its pathway is amino-acid biosynthesis; L-lysine biosynthesis via DAP pathway; LL-2,6-diaminopimelate from (S)-tetrahydrodipicolinate (acetylase route): step 3/3. Catalyzes the conversion of N-acetyl-diaminopimelate to diaminopimelate and acetate. This Listeria welshimeri serovar 6b (strain ATCC 35897 / DSM 20650 / CCUG 15529 / CIP 8149 / NCTC 11857 / SLCC 5334 / V8) protein is N-acetyldiaminopimelate deacetylase.